A 128-amino-acid chain; its full sequence is Phosphoribosyl-AMP cyclohydrolase (128 aa).

Asp-94 serves as a coordination point for Mg(2+). Residue Cys-95 coordinates Zn(2+). Positions 96 and 98 each coordinate Mg(2+). Zn(2+) is bound by residues Cys-111 and Cys-118.

It belongs to the PRA-CH family. In terms of assembly, homodimer. It depends on Mg(2+) as a cofactor. Requires Zn(2+) as cofactor.

It localises to the cytoplasm. The enzyme catalyses 1-(5-phospho-beta-D-ribosyl)-5'-AMP + H2O = 1-(5-phospho-beta-D-ribosyl)-5-[(5-phospho-beta-D-ribosylamino)methylideneamino]imidazole-4-carboxamide. The protein operates within amino-acid biosynthesis; L-histidine biosynthesis; L-histidine from 5-phospho-alpha-D-ribose 1-diphosphate: step 3/9. Catalyzes the hydrolysis of the adenine ring of phosphoribosyl-AMP. The chain is Phosphoribosyl-AMP cyclohydrolase from Streptomyces coelicolor (strain ATCC BAA-471 / A3(2) / M145).